Consider the following 398-residue polypeptide: Flavin-containing monooxygenase ustF1 (398 aa).

A signal peptide spans 1–22 (MTVSQVRRVAVIGAGISGVVST). 13–18 (GAGISG) contacts FAD. N-linked (GlcNAc...) asparagine glycosylation is found at Asn53, Asn57, Asn119, and Asn126. 194-199 (GGGVSS) provides a ligand contact to NADP(+). Residues Asn236, Asn243, and Asn271 are each glycosylated (N-linked (GlcNAc...) asparagine).

The protein belongs to the FMO family.

Its pathway is mycotoxin biosynthesis. Its function is as follows. Flavin-containing monooxygenase; part of the gene cluster that mediates the biosynthesis of the secondary metabolite ustiloxin B, an antimitotic tetrapeptide. First, ustA is processed by the subtilisin-like endoprotease Kex2 that is outside the ustiloxin B gene cluster, at the C-terminal side of Arg-Lys, after transfer to Golgi apparatus through the endoplasmic reticulum (ER). Cleavage by KEX2 generates 16 peptides YAIG-I to YAIG-XVI. To process the precursor peptide further, at least two peptidases are necessary to cleave the N-terminal and C-terminal sides of the Tyr-Ala-Ile-Gly core peptide which serves as backbone for the synthesis of ustiloxin B, through cyclization and modification of the tyrosine with a non-protein coding amino acid, norvaline. One of the two peptidases must be the serine peptidase ustP; and the other pepdidase is probably ustH. Macrocyclization of the core peptide derived from ustA requires the tyrosinase ustQ, as well as the homologous oxidases ustYa and ustYb, and leads to the production of the first cyclization product N-desmethylustiloxin F. For the formation of N-desmethylustiloxin F, three oxidation steps are required, hydroxylation at the benzylic position, hydroxylation at either the aromatic ring of Tyr or beta-position of Ile, and oxidative cyclization. UstQ may catalyze the oxidation of a phenol moiety, whereas the ustYa and ustYb are most likely responsible for the remaining two-step oxidations. N-desmethylustiloxin F is then methylated by ustM to yield ustiloxin F which in turn substrate of the cytochrome P450 monooxygenase ustC which catalyzes the formation of S-deoxyustiloxin H. The flavoprotein monooxygenases ustF1 and ustF2 then participate in the modification of the side chain of S-deoxyustiloxin H, leading to the synthesis of an oxime intermediate, via ustiloxin H. Finally, carboxylative dehydration performed by the cysteine desulfurase-like protein ustD yields ustiloxin B. This Aspergillus flavus (strain ATCC 200026 / FGSC A1120 / IAM 13836 / NRRL 3357 / JCM 12722 / SRRC 167) protein is Flavin-containing monooxygenase ustF1.